The following is a 157-amino-acid chain: Ribosome-binding factor A (157 aa).

Positions 127-157 (QQQFGSEDASVEDEVLGDDVADDADETEGKD) are disordered. Positions 135-157 (ASVEDEVLGDDVADDADETEGKD) are enriched in acidic residues.

It belongs to the RbfA family. In terms of assembly, monomer. Binds 30S ribosomal subunits, but not 50S ribosomal subunits or 70S ribosomes.

It localises to the cytoplasm. In terms of biological role, one of several proteins that assist in the late maturation steps of the functional core of the 30S ribosomal subunit. Associates with free 30S ribosomal subunits (but not with 30S subunits that are part of 70S ribosomes or polysomes). Required for efficient processing of 16S rRNA. May interact with the 5'-terminal helix region of 16S rRNA. This Shewanella baltica (strain OS155 / ATCC BAA-1091) protein is Ribosome-binding factor A.